A 560-amino-acid polypeptide reads, in one-letter code: Cytosolic purine 5'-nucleotidase (560 aa).

Catalysis depends on aspartate 52, which acts as the Nucleophile. IMP contacts are provided by aspartate 52 and aspartate 54. Mg(2+) contacts are provided by aspartate 52 and aspartate 54. Aspartate 54 acts as the Proton donor in catalysis. 2 residues coordinate ATP: arginine 144 and asparagine 154. IMP-binding residues include arginine 202, aspartate 206, lysine 215, threonine 249, asparagine 250, serine 251, and lysine 292. Aspartate 351 lines the Mg(2+) pocket. The residue at position 418 (serine 418) is a Phosphoserine. Glutamine 453 and arginine 456 together coordinate ATP. Phosphoserine occurs at positions 502, 511, and 527. The interval 541-560 (PQEITHCHDEDDDEEEEEEE) is disordered. The tract at residues 548 to 560 (HDEDDDEEEEEEE) is required for tetramer assembly. Residues 550-560 (EDDDEEEEEEE) show a composition bias toward acidic residues.

It belongs to the 5'(3')-deoxyribonucleotidase family. As to quaternary structure, homotetramer. The cofactor is Mg(2+).

The protein localises to the cytoplasm. It is found in the cytosol. The catalysed reaction is a ribonucleoside 5'-phosphate + H2O = a ribonucleoside + phosphate. It carries out the reaction a 2'-deoxyribonucleoside + a ribonucleoside 5'-phosphate = a ribonucleoside + a 2'-deoxyribonucleoside 5'-phosphate. It catalyses the reaction IMP + H2O = inosine + phosphate. The enzyme catalyses GMP + H2O = guanosine + phosphate. The catalysed reaction is dIMP + H2O = 2'-deoxyinosine + phosphate. It carries out the reaction dGMP + H2O = 2'-deoxyguanosine + phosphate. It catalyses the reaction XMP + H2O = xanthosine + phosphate. The enzyme catalyses inosine + GMP = guanosine + IMP. The catalysed reaction is dGMP + inosine = 2'-deoxyguanosine + IMP. It carries out the reaction dIMP + inosine = 2'-deoxyinosine + IMP. It catalyses the reaction inosine + UMP = uridine + IMP. The enzyme catalyses inosine + CMP = cytidine + IMP. The catalysed reaction is inosine + AMP = IMP + adenosine. Allosterically activated by various compounds including ATP, 2,3-BPG/2,3-Bisphosphoglyceric acid and Ap4A/P1,P4-bis(5'-adenosyl) tetraphosphate. Binding of an allosteric activator is a prerequisiste to magnesium and substrate binding. Inhibited by inorganic phosphate. Its function is as follows. Broad specificity cytosolic 5'-nucleotidase that catalyzes the dephosphorylation of 6-hydroxypurine nucleoside 5'-monophosphates. In addition, possesses a phosphotransferase activity by which it can transfer a phosphate from a donor nucleoside monophosphate to an acceptor nucleoside, preferably inosine, deoxyinosine and guanosine. Has the highest activities for IMP and GMP followed by dIMP, dGMP and XMP. Could also catalyze the transfer of phosphates from pyrimidine monophosphates but with lower efficiency. Through these activities regulates the purine nucleoside/nucleotide pools within the cell. The sequence is that of Cytosolic purine 5'-nucleotidase from Rattus norvegicus (Rat).